Here is a 298-residue protein sequence, read N- to C-terminus: Ribosomal protein L11 methyltransferase (298 aa).

Residues T148, G169, D191, and N233 each contribute to the S-adenosyl-L-methionine site.

Belongs to the methyltransferase superfamily. PrmA family.

The protein localises to the cytoplasm. The enzyme catalyses L-lysyl-[protein] + 3 S-adenosyl-L-methionine = N(6),N(6),N(6)-trimethyl-L-lysyl-[protein] + 3 S-adenosyl-L-homocysteine + 3 H(+). In terms of biological role, methylates ribosomal protein L11. This is Ribosomal protein L11 methyltransferase from Marinobacter nauticus (strain ATCC 700491 / DSM 11845 / VT8) (Marinobacter aquaeolei).